The following is a 519-amino-acid chain: Chaperone SurA (519 aa).

The signal sequence occupies residues 1-31 (MMRSLHSLRRMSGTVLALMLAAGLPLSAAQA). Low complexity-rich tracts occupy residues 31-45 (AQPA…QKPA) and 197-207 (PAAAQATRAPA). Disordered stretches follow at residues 31-50 (AQPA…PAPS) and 196-221 (NPAA…PAQS). One can recognise a PpiC 1 domain in the interval 223 to 324 (PAMLVLAQIL…NGFHILKVVD (102 aa)). Residues 328–361 (GGQPAQAARPAPAPAPQQPSSFQEGPSVAAPQGP) form a disordered region. The 100-residue stretch at 364–463 (VTQTHARHIL…FGWHLIQVLE (100 aa)) folds into the PpiC 2 domain.

The protein localises to the periplasm. It carries out the reaction [protein]-peptidylproline (omega=180) = [protein]-peptidylproline (omega=0). In terms of biological role, chaperone involved in the correct folding and assembly of outer membrane proteins. Recognizes specific patterns of aromatic residues and the orientation of their side chains, which are found more frequently in integral outer membrane proteins. May act in both early periplasmic and late outer membrane-associated steps of protein maturation. This Bordetella parapertussis (strain 12822 / ATCC BAA-587 / NCTC 13253) protein is Chaperone SurA.